Reading from the N-terminus, the 432-residue chain is Argininosuccinate lyase (432 aa).

This sequence belongs to the lyase 1 family. Argininosuccinate lyase subfamily.

The protein localises to the cytoplasm. The catalysed reaction is 2-(N(omega)-L-arginino)succinate = fumarate + L-arginine. It functions in the pathway amino-acid biosynthesis; L-arginine biosynthesis; L-arginine from L-ornithine and carbamoyl phosphate: step 3/3. The protein is Argininosuccinate lyase of Xanthomonas euvesicatoria pv. vesicatoria (strain 85-10) (Xanthomonas campestris pv. vesicatoria).